We begin with the raw amino-acid sequence, 496 residues long: Glutamyl-tRNA(Gln) amidotransferase subunit A (496 aa).

Catalysis depends on charge relay system residues Lys75 and Ser150. Residue Ser174 is the Acyl-ester intermediate of the active site.

The protein belongs to the amidase family. GatA subfamily. Heterotrimer of A, B and C subunits.

The enzyme catalyses L-glutamyl-tRNA(Gln) + L-glutamine + ATP + H2O = L-glutaminyl-tRNA(Gln) + L-glutamate + ADP + phosphate + H(+). Its function is as follows. Allows the formation of correctly charged Gln-tRNA(Gln) through the transamidation of misacylated Glu-tRNA(Gln) in organisms which lack glutaminyl-tRNA synthetase. The reaction takes place in the presence of glutamine and ATP through an activated gamma-phospho-Glu-tRNA(Gln). The polypeptide is Glutamyl-tRNA(Gln) amidotransferase subunit A (Burkholderia pseudomallei (strain 1106a)).